Reading from the N-terminus, the 193-residue chain is Putative manganese efflux pump MntP (193 aa).

6 consecutive transmembrane segments (helical) span residues 6–26 (VIFI…GIAC), 48–68 (AGMV…ISAF), 71–91 (WIAF…ALQG), 108–128 (LLGV…AFAV), 132–152 (NIGL…FLGF), and 165–185 (WVGV…LAEH).

This sequence belongs to the MntP (TC 9.B.29) family.

The protein resides in the cell membrane. In terms of biological role, probably functions as a manganese efflux pump. This Dehalococcoides mccartyi (strain ATCC BAA-2100 / JCM 16839 / KCTC 5957 / BAV1) protein is Putative manganese efflux pump MntP.